Consider the following 76-residue polypeptide: ATP synthase subunit 9, mitochondrial (76 aa).

2 helical membrane passes run 10–30 (IGAGISTIGLLGAGIGIAIVF) and 52–72 (ILGFALSEATGLFCLMISFLL).

It belongs to the ATPase C chain family. As to quaternary structure, F-type ATPases have 2 components, CF(1) - the catalytic core - and CF(0) - the membrane proton channel. CF(1) has five subunits: alpha(3), beta(3), gamma(1), delta(1), epsilon(1). CF(0) has three main subunits: a, b and c.

It is found in the mitochondrion membrane. Its function is as follows. Mitochondrial membrane ATP synthase (F(1)F(0) ATP synthase or Complex V) produces ATP from ADP in the presence of a proton gradient across the membrane which is generated by electron transport complexes of the respiratory chain. F-type ATPases consist of two structural domains, F(1) - containing the extramembraneous catalytic core and F(0) - containing the membrane proton channel, linked together by a central stalk and a peripheral stalk. During catalysis, ATP synthesis in the catalytic domain of F(1) is coupled via a rotary mechanism of the central stalk subunits to proton translocation. Part of the complex F(0) domain. A homomeric c-ring of probably 10 subunits is part of the complex rotary element. The sequence is that of ATP synthase subunit 9, mitochondrial (ATP9) from Kluyveromyces lactis (strain ATCC 8585 / CBS 2359 / DSM 70799 / NBRC 1267 / NRRL Y-1140 / WM37) (Yeast).